The chain runs to 979 residues: Peptidyl-glycine alpha-amidating monooxygenase (979 aa).

Residues 1–24 (MAGRARSRLLLLLGLLALQSSCLA) form the signal peptide. Residues 1-497 (MAGRARSRLL…EGPWEPELAG (497 aa)) form a peptidylglycine alpha-hydroxylating monooxygenase region. Positions 25–34 (FRSPLSVFKR) are excised as a propeptide. At 35–869 (FKETTRSFSN…KKLIKDPGSG (835 aa)) the chain is on the intragranular side. 5 cysteine pairs are disulfide-bonded: Cys46–Cys185, Cys80–Cys125, Cys113–Cys130, Cys226–Cys333, and Cys292–Cys314. 2 residues coordinate Cu(2+): His106 and His107. Positions 171, 241, 243, and 313 each coordinate Cu(2+). Residues 498–823 (DFHVEEALEW…SRLEVEHRSV (326 aa)) are peptidyl-alpha-hydroxyglycine alpha-amidating lyase. 4 NHL repeats span residues 501–544 (VEEA…NSFD), 570–611 (AEIL…LEPR), 620–665 (LGRS…FSPS), and 673–717 (GEES…FKTD). Residue Val520 coordinates Ca(2+). Arg533 contacts a protein. His585 is a Zn(2+) binding site. Position 587 (Leu587) interacts with Ca(2+). The cysteines at positions 634 and 655 are disulfide-linked. Tyr654 contributes to the a protein binding site. Residue His690 participates in Zn(2+) binding. A disulfide bond links Cys702 and Cys713. Residue Arg706 participates in a protein binding. Asn765 carries N-linked (GlcNAc...) asparagine glycosylation. The NHL 5 repeat unit spans residues 769–812 (GEIIDVFKPVRKHFDMPHDIVASEDGTVYIGDAHTNTVWKFTLT). His786 serves as a coordination point for Zn(2+). Ca(2+) is bound at residue Asp787. Residues 870-893 (VPVVLITTLLVIPVVVLLAIAMFI) form a helical membrane-spanning segment. The Cytoplasmic segment spans residues 894–979 (RWKKSRAFGD…APLPTPAPSS (86 aa)). A phosphoserine mark is found at Ser924, Ser925, Ser935, and Ser948. The tract at residues 931 to 948 (NFFASRKGYSRKGFDRVS) is interaction with RASSF9. Residues 943 to 979 (GFDRVSTEGSDQEKDEDDGSESEEEYSAPLPTPAPSS) are disordered. Residue Thr949 is modified to Phosphothreonine. A Phosphoserine; by UHMK1 modification is found at Ser952. Acidic residues predominate over residues 955–968 (EKDEDDGSESEEEY). Position 964 is a phosphoserine (Ser964).

The protein in the C-terminal section; belongs to the peptidyl-alpha-hydroxyglycine alpha-amidating lyase family. In the N-terminal section; belongs to the copper type II ascorbate-dependent monooxygenase family. Monomer. Interacts with RASSF9. It depends on Zn(2+) as a cofactor. Cu(2+) is required as a cofactor.

It localises to the cytoplasmic vesicle. It is found in the secretory vesicle membrane. It catalyses the reaction a [peptide]-C-terminal glycine + 2 L-ascorbate + O2 = a [peptide]-C-terminal (2S)-2-hydroxyglycine + 2 monodehydro-L-ascorbate radical + H2O. The enzyme catalyses a [peptide]-C-terminal (2S)-2-hydroxyglycine = a [peptide]-C-terminal amide + glyoxylate. It carries out the reaction N-dodecanoylglycine + 2 L-ascorbate + O2 = N-dodecanoyl-(2S)-hydroxyglycine + 2 monodehydro-L-ascorbate radical + H2O. The catalysed reaction is N-dodecanoyl-(2S)-hydroxyglycine = dodecanamide + glyoxylate. It catalyses the reaction N-(9Z,12Z,15Z)-octadecatrienoylglycine + 2 L-ascorbate + O2 = N-(9Z,12Z,15Z)-octadecatrienoyl-(2S)-hydroxyglycine + 2 monodehydro-L-ascorbate radical + H2O. The enzyme catalyses N-(9Z,12Z,15Z)-octadecatrienoyl-(2S)-hydroxyglycine = (9Z,12Z,15Z)-octadecatrienamide + glyoxylate. It carries out the reaction N-(9Z-octadecenoyl)glycine + 2 L-ascorbate + O2 = N-(9Z-octadecenoyl)-(2S)-hydroxyglycine + 2 monodehydro-L-ascorbate radical + H2O. The catalysed reaction is N-(9Z-octadecenoyl)-(2S)-hydroxyglycine = (9Z)-octadecenamide + glyoxylate. It catalyses the reaction N-tetradecanoylglycine + 2 L-ascorbate + O2 = N-tetradecanoyl-(2S)-hydroxyglycine + 2 monodehydro-L-ascorbate radical + H2O. The enzyme catalyses N-tetradecanoyl-(2S)-hydroxyglycine = tetradecamide + glyoxylate. It carries out the reaction N-decanoylglycine + 2 L-ascorbate + O2 = N-decanoyl-(2S)-hydroxyglycine + 2 monodehydro-L-ascorbate radical + H2O. The catalysed reaction is N-decanoyl-(2S)-hydroxyglycine = decanamide + glyoxylate. It catalyses the reaction N-octanoylglycine + 2 L-ascorbate + O2 = N-octanoyl-(2S)-hydroxyglycine + 2 monodehydro-L-ascorbate radical + H2O. The enzyme catalyses N-octanoyl-(2S)-hydroxyglycine = octanamide + glyoxylate. Its activity is regulated as follows. PAM activity is inhibited by EDTA, phenylglyoxal and diethyl pyrocarbonate. PAL activity is stimulated by cadmium and inhibited by mercury. Bifunctional enzyme that catalyzes amidation of the C-terminus of proteins. Alpha-amidation is present at the C-terminus of many endocrine hormones and neuropeptides and is required for their activity. C-terminal amidation also takes place in response to protein fragmentation triggered by oxidative stress, promoting degradation of amidated protein fragments by the proteasome. Alpha-amidation involves two sequential reactions, both of which are catalyzed by separate catalytic domains of the enzyme. The first step, catalyzed by peptidyl alpha-hydroxylating monooxygenase (PHM) domain, is the copper-, ascorbate-, and O2- dependent stereospecific hydroxylation (with S stereochemistry) at the alpha-carbon (C-alpha) of the C-terminal glycine of the peptidylglycine substrate. The second step, catalyzed by the peptidylglycine amidoglycolate lyase (PAL) domain, is the zinc-dependent cleavage of the N-C-alpha bond, producing the alpha-amidated peptide and glyoxylate. Similarly, catalyzes the two-step conversion of an N-fatty acylglycine to a primary fatty acid amide and glyoxylate. The sequence is that of Peptidyl-glycine alpha-amidating monooxygenase from Mus musculus (Mouse).